The primary structure comprises 349 residues: 3-isopropylmalate dehydrogenase (349 aa).

The substrate site is built by Arg-91, Arg-101, Arg-129, and Asp-219. Residues Asp-219, Asp-243, and Asp-247 each coordinate Mg(2+). 277–289 (GSAPDIAGLGKAN) serves as a coordination point for NAD(+).

It belongs to the isocitrate and isopropylmalate dehydrogenases family. LeuB type 1 subfamily. Homodimer. Mg(2+) is required as a cofactor. Requires Mn(2+) as cofactor.

It is found in the cytoplasm. It carries out the reaction (2R,3S)-3-isopropylmalate + NAD(+) = 4-methyl-2-oxopentanoate + CO2 + NADH. The protein operates within amino-acid biosynthesis; L-leucine biosynthesis; L-leucine from 3-methyl-2-oxobutanoate: step 3/4. In terms of biological role, catalyzes the oxidation of 3-carboxy-2-hydroxy-4-methylpentanoate (3-isopropylmalate) to 3-carboxy-4-methyl-2-oxopentanoate. The product decarboxylates to 4-methyl-2 oxopentanoate. This Zymomonas mobilis subsp. mobilis (strain ATCC 31821 / ZM4 / CP4) protein is 3-isopropylmalate dehydrogenase.